The sequence spans 89 residues: MANHKSAEKRNRQNQVARLRNKSTRTAMKNSVRKLDEALEAGVEADTAEALRGAISRIAKTASKGVIHKKTASRKISRLTKRVNALVAA.

The span at 1 to 11 (MANHKSAEKRN) shows a compositional bias: basic and acidic residues. Residues 1-30 (MANHKSAEKRNRQNQVARLRNKSTRTAMKN) are disordered.

Belongs to the bacterial ribosomal protein bS20 family.

In terms of biological role, binds directly to 16S ribosomal RNA. The polypeptide is Small ribosomal subunit protein bS20 (Desulfotalea psychrophila (strain LSv54 / DSM 12343)).